The primary structure comprises 208 residues: Probable DNA-3-methyladenine glycosylase (208 aa).

Belongs to the DNA glycosylase MPG family.

The protein resides in the nucleus. The catalysed reaction is Hydrolysis of alkylated DNA, releasing 3-methyladenine, 3-methylguanine, 7-methylguanine and 7-methyladenine.. In terms of biological role, hydrolysis of the deoxyribose N-glycosidic bond to excise 3-methyladenine, and 7-methylguanine from the damaged DNA polymer formed by alkylation lesions. The protein is Probable DNA-3-methyladenine glycosylase of Encephalitozoon cuniculi (strain GB-M1) (Microsporidian parasite).